Here is an 887-residue protein sequence, read N- to C-terminus: Lateral signaling target protein 2 homolog (887 aa).

Residue K87 forms a Glycyl lysine isopeptide (Lys-Gly) (interchain with G-Cter in ubiquitin) linkage. The disordered stretch occupies residues 308-327 (PALSAPLPPEGPLSAKAKDP). Residue S334 is modified to Phosphoserine. Disordered stretches follow at residues 354-396 (DEMS…GSDE) and 412-474 (ALAR…ASLA). Position 516 is a phosphothreonine (T516). S586 is modified (phosphoserine; by MAP2K). The disordered stretch occupies residues 599-714 (LAKASDRAPE…THAAPQATRE (116 aa)). A compositionally biased stretch (basic and acidic residues) spans 602–612 (ASDRAPERQEE). Residues 638 to 648 (TSGSQVDTASG) show a composition bias toward polar residues. Composition is skewed to low complexity over residues 681–693 (SGSSSSTAGSCSS) and 700–711 (AAPAATHAAPQA). Residues 817–879 (DEACGFCTAC…THCYMFHVTP (63 aa)) form an FYVE-type zinc finger. C823, C826, C839, C842, C847, C850, and C869 together coordinate Zn(2+). A Phosphothreonine; by MAP2K modification is found at T870. C872 lines the Zn(2+) pocket.

Belongs to the lst-2 family. Interacts with TRIM3. Monoubiquitination at Lys-87 prevents binding to phosphatidylinositol 3-phosphate (PI3P) and localization to early endosome membranes.

It localises to the cytoplasm. Its subcellular location is the cytosol. It is found in the early endosome membrane. In terms of biological role, negative regulator of epidermal growth factor receptor (EGFR) signaling. Acts by promoting EGFR degradation in endosomes when not monoubiquitinated. This Homo sapiens (Human) protein is Lateral signaling target protein 2 homolog (ZFYVE28).